The sequence spans 405 residues: uncharacterized protein (405 aa).

Transmembrane regions (helical) follow at residues 19–39 (IVSIVMFNFASYLTIGLPLAV), 47–67 (VMGFSAFWAGLVISLQYFATL), 85–105 (IVVFGLCGCFLSGLGYLTAGL), 107–127 (ASLPVISLLLLCLGRVILGIG), 156–176 (GIVTYGAMAMGAPLGVVFYHW), 178–198 (GLQALALIIMGVALVAILLAI), 224–244 (GMALALASAGFGVIATFITLF), 252–272 (GAAFALTLFSCAFVGTRLLFP), 283–303 (VAMICFSVEIIGLLLVGVATM), 309–329 (IGVLLAGAGFSLVFPALGVVA), 344–364 (TYTVFMDLSLGVTGPLAGLVM), and 366–386 (WAGVPVIYLAAAGLVAIALLL).

This sequence belongs to the major facilitator superfamily. YhhS family.

The protein localises to the cell inner membrane. This is an uncharacterized protein from Escherichia coli O6:H1 (strain CFT073 / ATCC 700928 / UPEC).